The chain runs to 392 residues: Frizzled-9 (392 aa).

Residues 1-35 (ACDNPEKFQYVEKSLSCAPRCSPGVDVYWSREDKD) are Extracellular-facing. Residues 36 to 56 (FAFVWMAVWSTLCFVSTAFTV) traverse the membrane as a helical segment. The Cytoplasmic segment spans residues 57-72 (LTFLLDPHRFQYPERP). Residues 73–93 (IIFLSMCYNVYSVAFIIRSVA) traverse the membrane as a helical segment. Residues 94–119 (GAETIACDRENGELYIIQEGLESTGC) are Extracellular-facing. Residues 120-140 (TIVFLILYYFGMASSLWWVVL) form a helical membrane-spanning segment. Residues 141–161 (TLTWFLAAGKKWGHEAIEAHS) are Cytoplasmic-facing. The helical transmembrane segment at 162-182 (SYFHMAAWGIPAMKTIVILTM) threads the bilayer. Residues 183-206 (RKVAGDELTGLCYVGSMDVSALTG) lie on the Extracellular side of the membrane. The helical transmembrane segment at 207–227 (FVLIPLSCYLVVGTSFILTGF) threads the bilayer. Over 228–253 (VALFHIRKIMKTGGTNTEKLEKLMVK) the chain is Cytoplasmic. A helical membrane pass occupies residues 254 to 274 (IGVFSILYTVPATCVIVCYFY). Topologically, residues 275 to 312 (ERLNVDYWNLRALERACVPLPGRRAADCSLEASVPTVA) are extracellular. A helical transmembrane segment spans residues 313–333 (VFMLKIFMSLVVGITSGVWVW). Residues 334–392 (SSKTLQTWQSLCNRKLGVRTRGKPCSGVSCGGVHCHYKAPTVMLHMTKTDPYLDNPTHV) lie on the Cytoplasmic side of the membrane. The Lys-Thr-X-X-X-Trp motif, mediates interaction with the PDZ domain of Dvl family members motif lies at 336 to 341 (KTLQTW). A PDZ-binding motif is present at residues 390-392 (THV).

The protein belongs to the G-protein coupled receptor Fz/Smo family.

It localises to the cell membrane. Functionally, receptor for WNT2 that is coupled to the beta-catenin canonical signaling pathway, which leads to the activation of disheveled proteins, inhibition of GSK-3 kinase, nuclear accumulation of beta-catenin and activation of Wnt target genes. This Gallus gallus (Chicken) protein is Frizzled-9 (FZD9).